We begin with the raw amino-acid sequence, 456 residues long: Adenylosuccinate synthetase isozyme 2 (456 aa).

The interval 1–24 is disordered; that stretch reads MAFAETYPAASSLPNGDCGRPRAR. Residues 39–45 and 67–69 contribute to the GTP site; these read GDEGKGK and GHT. Asp-40 acts as the Proton acceptor in catalysis. Positions 40 and 67 each coordinate Mg(2+). Asp-40 is a binding site for substrate. IMP contacts are provided by residues 40 to 43, 65 to 68, Thr-162, Arg-176, Asn-255, Thr-270, and Arg-334; these read DEGK and NAGH. The active-site Proton donor is the His-68. Substrate is bound at residue 330–336; the sequence is VTTGRKR. GTP is bound by residues Arg-336, 362 to 364, and 444 to 447; these read KLD and GVGK.

It belongs to the adenylosuccinate synthetase family. Homodimer. Requires Mg(2+) as cofactor.

The protein resides in the cytoplasm. The protein localises to the mitochondrion. The enzyme catalyses IMP + L-aspartate + GTP = N(6)-(1,2-dicarboxyethyl)-AMP + GDP + phosphate + 2 H(+). The protein operates within purine metabolism; AMP biosynthesis via de novo pathway; AMP from IMP: step 1/2. With respect to regulation, inhibited competitively by AMP and IMP and non-competitively by fructose 1,6-bisphosphate. In terms of biological role, plays an important role in the de novo pathway and in the salvage pathway of purine nucleotide biosynthesis. Catalyzes the first committed step in the biosynthesis of AMP from IMP. The sequence is that of Adenylosuccinate synthetase isozyme 2 from Homo sapiens (Human).